The primary structure comprises 349 residues: tRNA pseudouridine synthase D (349 aa).

Position 26 (phenylalanine 26) interacts with substrate. Aspartate 79 functions as the Nucleophile in the catalytic mechanism. Asparagine 128 contributes to the substrate binding site. The TRUD domain occupies 154-302 (GVPNYFGEQR…VEGCRRAILV (149 aa)). Phenylalanine 328 is a binding site for substrate.

The protein belongs to the pseudouridine synthase TruD family.

The enzyme catalyses uridine(13) in tRNA = pseudouridine(13) in tRNA. Its function is as follows. Responsible for synthesis of pseudouridine from uracil-13 in transfer RNAs. The chain is tRNA pseudouridine synthase D from Photorhabdus laumondii subsp. laumondii (strain DSM 15139 / CIP 105565 / TT01) (Photorhabdus luminescens subsp. laumondii).